A 410-amino-acid chain; its full sequence is Phosphoglycerate kinase (410 aa).

Residues 24–26 (DLN), arginine 40, 63–66 (HLGR), arginine 122, and arginine 162 each bind substrate. ATP-binding positions include lysine 212, glycine 300, glutamate 331, and 360 to 363 (GGDS).

It belongs to the phosphoglycerate kinase family. In terms of assembly, monomer.

Its subcellular location is the cytoplasm. It carries out the reaction (2R)-3-phosphoglycerate + ATP = (2R)-3-phospho-glyceroyl phosphate + ADP. Its pathway is carbohydrate degradation; glycolysis; pyruvate from D-glyceraldehyde 3-phosphate: step 2/5. The polypeptide is Phosphoglycerate kinase (Nocardia farcinica (strain IFM 10152)).